The chain runs to 118 residues: Succinate dehydrogenase assembly factor 4, mitochondrial (118 aa).

Residues 1-30 (MQSVTRQTARVLPQMGKQVSYLSTSGAWRA) constitute a mitochondrion transit peptide. The disordered stretch occupies residues 65 to 118 (GKLDEFSRHPYQEKEPLKPWPNQTNPYTGEIGGPAGPEPTRYGDWERKGRVSDF). Basic and acidic residues-rich tracts occupy residues 66-81 (KLDE…KEPL) and 105-118 (RYGD…VSDF).

It belongs to the SDHAF4 family. In terms of assembly, interacts with SdhA in its FAD-bound form.

It localises to the mitochondrion matrix. Its function is as follows. Plays an essential role in the assembly of succinate dehydrogenase (SDH), an enzyme complex (also referred to as respiratory complex II) that is a component of both the tricarboxylic acid (TCA) cycle and the mitochondrial electron transport chain, and which couples the oxidation of succinate to fumarate with the reduction of ubiquinone (coenzyme Q) to ubiquinol. Binds to the flavoprotein subunit SdhA in its FAD-bound form, blocking the generation of excess reactive oxygen species (ROS) and facilitating its assembly with the iron-sulfur protein subunit SdhB into the SDH catalytic dimer. This is Succinate dehydrogenase assembly factor 4, mitochondrial from Drosophila melanogaster (Fruit fly).